A 694-amino-acid chain; its full sequence is Polynucleotide 5'-hydroxyl-kinase NOL9 (694 aa).

The residue at position 2 (Ala2) is an N-acetylalanine. The Nucleolar localization signal signature appears at 31-47 (RRPRRRLRNLRWRSRRR). The segment at 80–101 (TSARRRASSPEPAEDPVPSGPA) is disordered. 298-305 (GCQDIGKS) is a binding site for ATP. The tract at residues 472–694 (FADEEKEGPV…PKPKFYRKTY (223 aa)) is interaction with LAS1L. Residue Lys477 forms a Glycyl lysine isopeptide (Lys-Gly) (interchain with G-Cter in SUMO2) linkage.

Belongs to the Clp1 family. NOL9/GRC3 subfamily. As to quaternary structure, interacts with PELP1, WDR18 and SENP3. Interacts with LAS1L to form an ITS2 pre-rRNA endonuclease-kinase complex.

It is found in the nucleus. The protein localises to the nucleolus. It carries out the reaction a 5'-end dephospho-2'-deoxyribonucleoside-DNA + ATP = a 5'-end 5'-phospho-2'-deoxyribonucleoside-DNA + ADP + H(+). The enzyme catalyses a 5'-end dephospho-ribonucleoside-RNA + ATP = a 5'-end 5'-phospho-ribonucleoside-RNA + ADP + H(+). In terms of biological role, polynucleotide kinase that can phosphorylate the 5'-hydroxyl groups of single-stranded and double-stranded RNA and DNA substrates. Involved in rRNA processing and its kinase activity is required for the processing of the 32S precursor into 5.8S and 28S rRNAs, more specifically for the generation of the major 5.8S(S) form. Required for the efficient pre-rRNA processing of internal transcribed spacer 2 (ITS2). Associates with LAS1L to form an ITS2 pre-rRNA endonuclease-kinase complex and is responsible for the transport of this complex into the nucleolus. This chain is Polynucleotide 5'-hydroxyl-kinase NOL9 (NOL9), found in Bos taurus (Bovine).